A 732-amino-acid chain; its full sequence is Acylamino-acid-releasing enzyme (732 aa).

Met-1 carries the N-acetylmethionine modification. Ser-187 is modified (phosphoserine). Active-site charge relay system residues include Ser-587, Asp-675, and His-707.

Belongs to the peptidase S9C family. Homotetramer. Expressed in the liver (at protein level).

Its subcellular location is the cytoplasm. It catalyses the reaction Cleavage of an N-acetyl or N-formyl amino acid from the N-terminus of a polypeptide.. Its activity is regulated as follows. Homotetramerization is required for activity. Tetramerization results in the formation of a gated channel which is involved in substrate selection and substrate access to the catalytic sites. This enzyme catalyzes the hydrolysis of the N-terminal peptide bond of an N-acetylated peptide to generate an N-acetylated amino acid and a peptide with a free N-terminus. It preferentially cleaves off Ac-Ala, Ac-Met and Ac-Ser. Also, involved in the degradation of oxidized and glycated proteins. This is Acylamino-acid-releasing enzyme (APEH) from Sus scrofa (Pig).